The primary structure comprises 456 residues: L-seryl-tRNA(Sec) selenium transferase (456 aa).

Position 288 is an N6-(pyridoxal phosphate)lysine (Lys-288).

The protein belongs to the SelA family. Pyridoxal 5'-phosphate serves as cofactor.

It localises to the cytoplasm. It carries out the reaction L-seryl-tRNA(Sec) + selenophosphate + H(+) = L-selenocysteinyl-tRNA(Sec) + phosphate. Its pathway is aminoacyl-tRNA biosynthesis; selenocysteinyl-tRNA(Sec) biosynthesis; selenocysteinyl-tRNA(Sec) from L-seryl-tRNA(Sec) (bacterial route): step 1/1. Converts seryl-tRNA(Sec) to selenocysteinyl-tRNA(Sec) required for selenoprotein biosynthesis. The protein is L-seryl-tRNA(Sec) selenium transferase of Helicobacter hepaticus (strain ATCC 51449 / 3B1).